The chain runs to 245 residues: Carbohydrate deacetylase (245 aa).

Mg(2+) is bound by residues His59 and His125.

The protein belongs to the YdjC deacetylase family. Homodimer. It depends on Mg(2+) as a cofactor.

Probably catalyzes the deacetylation of acetylated carbohydrates an important step in the degradation of oligosaccharides. This chain is Carbohydrate deacetylase, found in Listeria welshimeri serovar 6b (strain ATCC 35897 / DSM 20650 / CCUG 15529 / CIP 8149 / NCTC 11857 / SLCC 5334 / V8).